The sequence spans 500 residues: MSAQFSLPATGLATQLELSKKLPEDIDALVVPTFKGEDGLELAASGLFDENLEIAIWDLLVAVGATGKQGEVVRIPSIEGIEVDFIVGVGLGDNDSLDDDTLRRAAGDAARSLAGVQHVATTLGAFGLQPAVEGFALGAYNYTGVRSKQKKPLPLEKVTFISLGDKKAAKEEFTVGQIIAESVALCRDLVNAPSSHLYPESYAAIIRDTAEKIGLGVEILDEKKLEKQGFGGILAVGTGSSRKPRLVRLTWAPKKAKKSIALVGKGITFDTGGISLKPGAGMDDMISDMGGSATMVATIIAAARLGVKLNVTATIPLAENMPGGNAFRPGDVITHYGGITSEILNTDAEGRLVLADAIARASEDKPDYLLNVATLTGAQIVALGDRTSGVMGSDEFRDSVALTGRTVGEPAWAMPLPEEIGEDVKSPVADIRNVTGSRSGGMMAAGWYLSHFVGEGIEWAHVDIAGPAYNKAGVYGYIPKRATGVPVRTFVQVLSNLAEQ.

Positions 265 and 270 each coordinate Mn(2+). Lys-277 is a catalytic residue. Residues Asp-288, Asp-347, and Glu-349 each coordinate Mn(2+). Arg-351 is an active-site residue.

The protein belongs to the peptidase M17 family. The cofactor is Mn(2+).

The protein localises to the cytoplasm. The enzyme catalyses Release of an N-terminal amino acid, Xaa-|-Yaa-, in which Xaa is preferably Leu, but may be other amino acids including Pro although not Arg or Lys, and Yaa may be Pro. Amino acid amides and methyl esters are also readily hydrolyzed, but rates on arylamides are exceedingly low.. It carries out the reaction Release of an N-terminal amino acid, preferentially leucine, but not glutamic or aspartic acids.. In terms of biological role, presumably involved in the processing and regular turnover of intracellular proteins. Catalyzes the removal of unsubstituted N-terminal amino acids from various peptides. This is Probable cytosol aminopeptidase from Corynebacterium diphtheriae (strain ATCC 700971 / NCTC 13129 / Biotype gravis).